Here is a 94-residue protein sequence, read N- to C-terminus: Small ribosomal subunit protein bS20 (94 aa).

This sequence belongs to the bacterial ribosomal protein bS20 family.

Binds directly to 16S ribosomal RNA. In Acaryochloris marina (strain MBIC 11017), this protein is Small ribosomal subunit protein bS20.